Consider the following 237-residue polypeptide: Undecaprenyl-diphosphatase (237 aa).

The next 7 helical transmembrane spans lie at 38-58 (QTAV…FDGI), 65-85 (WRII…GVLF), 92-112 (LFSS…ILMF), 126-146 (MSFL…FPGI), 166-186 (ALQY…ILGL), 191-211 (VTIL…YVLS), and 217-237 (GKIW…YLVG).

It belongs to the UppP family.

It is found in the cell inner membrane. The enzyme catalyses di-trans,octa-cis-undecaprenyl diphosphate + H2O = di-trans,octa-cis-undecaprenyl phosphate + phosphate + H(+). In terms of biological role, catalyzes the dephosphorylation of undecaprenyl diphosphate (UPP). Confers resistance to bacitracin. The chain is Undecaprenyl-diphosphatase from Thermotoga sp. (strain RQ2).